We begin with the raw amino-acid sequence, 503 residues long: Maturase K (503 aa).

It belongs to the intron maturase 2 family. MatK subfamily.

The protein resides in the plastid. It is found in the chloroplast. Its function is as follows. Usually encoded in the trnK tRNA gene intron. Probably assists in splicing its own and other chloroplast group II introns. The chain is Maturase K from Psilotum nudum (Whisk fern).